The primary structure comprises 93 residues: Small ribosomal subunit protein uS19 (93 aa).

The protein belongs to the universal ribosomal protein uS19 family.

Its function is as follows. Protein S19 forms a complex with S13 that binds strongly to the 16S ribosomal RNA. This chain is Small ribosomal subunit protein uS19, found in Thermoanaerobacter pseudethanolicus (strain ATCC 33223 / 39E) (Clostridium thermohydrosulfuricum).